The following is a 291-amino-acid chain: Ribosomal RNA small subunit methyltransferase H (291 aa).

Residues 31-33 (GGH), Asp50, Phe77, Asp98, and Gln105 each bind S-adenosyl-L-methionine.

This sequence belongs to the methyltransferase superfamily. RsmH family.

The protein localises to the cytoplasm. It carries out the reaction cytidine(1402) in 16S rRNA + S-adenosyl-L-methionine = N(4)-methylcytidine(1402) in 16S rRNA + S-adenosyl-L-homocysteine + H(+). Its function is as follows. Specifically methylates the N4 position of cytidine in position 1402 (C1402) of 16S rRNA. The sequence is that of Ribosomal RNA small subunit methyltransferase H from Endomicrobium trichonymphae.